We begin with the raw amino-acid sequence, 354 residues long: Homoserine O-succinyltransferase (354 aa).

Residue C146 is the Acyl-thioester intermediate of the active site. Residues K167 and S196 each coordinate substrate. Residue H239 is the Proton acceptor of the active site. Residue E241 is part of the active site. Residue R253 coordinates substrate.

It belongs to the MetA family.

Its subcellular location is the cytoplasm. It carries out the reaction L-homoserine + succinyl-CoA = O-succinyl-L-homoserine + CoA. The protein operates within amino-acid biosynthesis; L-methionine biosynthesis via de novo pathway; O-succinyl-L-homoserine from L-homoserine: step 1/1. Its function is as follows. Transfers a succinyl group from succinyl-CoA to L-homoserine, forming succinyl-L-homoserine. This is Homoserine O-succinyltransferase from Methylobacter tundripaludum (strain ATCC BAA-1195 / DSM 17260 / SV96).